Reading from the N-terminus, the 518-residue chain is Cytochrome P450 CYP72A219 (518 aa).

A helical transmembrane segment spans residues 2–22 (ELVLKLISSFCAIVVVILLGW). Cys-465 contacts heme.

Belongs to the cytochrome P450 family. It depends on heme as a cofactor.

Its subcellular location is the membrane. Its function is as follows. Probable heme-thiolate monooxygenase. This Panax ginseng (Korean ginseng) protein is Cytochrome P450 CYP72A219.